The following is a 314-amino-acid chain: Probable serine/threonine-protein kinase WNK11 (314 aa).

The interval 1–22 (MMTCASSDDNESEKDKDSESFV) is disordered. Positions 31–289 (GRYGELLGSG…AAELLCDPFF (259 aa)) constitute a Protein kinase domain. ATP is bound at residue 111 to 114 (TEIC). D178 serves as the catalytic Proton acceptor. The segment at 295–314 (DDDEDGENNDNNGAGRIVVS) is disordered.

It belongs to the protein kinase superfamily. Ser/Thr protein kinase family. WNK subfamily.

The enzyme catalyses L-seryl-[protein] + ATP = O-phospho-L-seryl-[protein] + ADP + H(+). The catalysed reaction is L-threonyl-[protein] + ATP = O-phospho-L-threonyl-[protein] + ADP + H(+). Its function is as follows. May regulate flowering time by modulating the photoperiod pathway. The protein is Probable serine/threonine-protein kinase WNK11 (WNK11) of Arabidopsis thaliana (Mouse-ear cress).